The sequence spans 354 residues: MSPPALPSHHRAIVQANTDPVTFEISENRPVPVPLDDEILIKVSAVALNHCDYKMPGRVPCPGAVNGADYSGTVVRMGKKAELESGLRIGDHVAGAQVASSRRAPWAGAFAEYIRHHHSMVWKVPDGWSWEKAAAIGCATTSTVGMALWITLGLTGTPEEPAQEPEFVLVSGYRVVTTCSPKNFAMVESYGAEKAFDYHSSTCGEDIRAYTENRLQYVLDIITEARTIRQCYAAIGRGGGKYCGFELLPDDLLSTLRKSVKADWTMGLELTGNEVDLPGGYYRAANPEMHKWFVLWKQRYVALYDAGKLKPHPITVREGGLDKVIDGIETMRRREVSGEKIVYPLYNNSSKGVV.

Residues 16 to 342 (ANTDPVTFEI…RREVSGEKIV (327 aa)) form the Enoyl reductase (ER) domain. Residues 51–54 (CDYK), 180–183 (SPKN), Tyr198, 245–246 (FE), and 336–337 (VS) each bind NADP(+).

The protein belongs to the zinc-containing alcohol dehydrogenase family. Monomer.

Its pathway is mycotoxin biosynthesis. In terms of biological role, trans-enoyl reductase; part of the gene cluster that mediates the biosynthesis of pyrrocidines, fungal natural products containing a macrocyclic para-cyclophane connected to a decahydrofluorene ring system that show potent antibiotic activities toward Gram-negative bacteria. Within the pathway, the PKS-NRPS pydA, with the help of the trans-enoyl reductase pydC, synthesize the polyketide-tyrosyl acyl thioester product which can be reductively off-loaded by the terminal reductase (R) domain in pydA. The PKS module of pydA acts in combination with the trans-acting enoyl reductase pydC to produce a methylated polyketide attached to the ACP domain. In parallel, the adenylation (A) domain of the NRPS module activated L-tyrosine, which is then transferred to the ACP domain. The condensation (C) domain subsequently link this group to the polyketide chain, forming an enzyme-bound amide. The alpha/beta hydrolase pydG is then required to catalyze the subsequent Knoevenagel condensation that affords the 3-pyrrolin-2-one ring, whereas the four proteins pydB, pydE, pydX and pydZ then function synergistically to form the cyclophane. PydB and the membrane-bound pydX and pydZ are lipid-binding proteins that can sequester and mold the pdyG product into the inverse S-shape. Binding of the medium chain reductase pydE to the complex would trigger the cascade oxidative cyclization. PydY is involved in the Diels-Alder cycloaddition that forms the decahydrofluorene core. Additional non-enzymatic hydroxylation yields pyrrocidine A2 which can be further reduced into pyrrocidine B by an endogenous reductase. This chain is Trans-enoyl reductase pydC, found in Acremonium sp.